The chain runs to 226 residues: Ribose-5-phosphate isomerase A (226 aa).

Substrate is bound by residues 26-29 (TGST), 82-85 (DGAD), and 95-98 (KGGG). The active-site Proton acceptor is Glu-104. Lys-122 contributes to the substrate binding site.

The protein belongs to the ribose 5-phosphate isomerase family. In terms of assembly, homodimer.

It carries out the reaction aldehydo-D-ribose 5-phosphate = D-ribulose 5-phosphate. The protein operates within carbohydrate degradation; pentose phosphate pathway; D-ribose 5-phosphate from D-ribulose 5-phosphate (non-oxidative stage): step 1/1. In terms of biological role, catalyzes the reversible conversion of ribose-5-phosphate to ribulose 5-phosphate. This chain is Ribose-5-phosphate isomerase A, found in Streptococcus uberis (strain ATCC BAA-854 / 0140J).